The following is a 503-amino-acid chain: Serine/threonine-protein kinase chk-1 (503 aa).

The region spanning 24-286 is the Protein kinase domain; sequence YRVVQTLGEG…IEQIQADPWY (263 aa). ATP-binding positions include 30–38 and lysine 54; that span reads LGEGAFGEV. Aspartate 150 acts as the Proton acceptor in catalysis. A disordered region spans residues 320–346; that stretch reads SAKRRHLETPNEKSTLAERQNASFSQP. Residues 331–346 are compositionally biased toward polar residues; the sequence is EKSTLAERQNASFSQP. The residue at position 344 (serine 344) is a Phosphoserine.

The protein belongs to the protein kinase superfamily. CAMK Ser/Thr protein kinase family. NIM1 subfamily. In terms of tissue distribution, expressed in the germline.

The protein resides in the cytoplasm. Its subcellular location is the nucleus. It localises to the perinuclear region. The enzyme catalyses L-seryl-[protein] + ATP = O-phospho-L-seryl-[protein] + ADP + H(+). The catalysed reaction is L-threonyl-[protein] + ATP = O-phospho-L-threonyl-[protein] + ADP + H(+). Its function is as follows. Serine/threonine-protein kinase which is required for checkpoint-mediated cell cycle arrest and activation of DNA repair in response to the presence of DNA damage or unreplicated DNA. May also negatively regulate cell cycle progression during unperturbed cell cycles. Required for checkpoint mediated cell cycle arrest in response to DNA damage in germline cells. Delays cell-cycle reentry of the Z2 and Z3 primordial germ cells in response to transcription-induced DNA damage as they emerge from cell cycle arrest in L1 larvae. Essential for embryogenesis. In Caenorhabditis elegans, this protein is Serine/threonine-protein kinase chk-1.